Reading from the N-terminus, the 1615-residue chain is Regulating synaptic membrane exocytosis protein 1 (1615 aa).

The segment at 1–26 (MSSAVGPRGPRPPTVPPPMQELPDLS) is disordered. Residues 9–20 (GPRPPTVPPPMQ) show a composition bias toward pro residues. Residues 22–205 (LPDLSHLTEE…TKSGAWFFGS (184 aa)) enclose the RabBD domain. The segment at 133 to 193 (KDDAPTCGIC…VCNLCRKQQE (61 aa)) adopts an FYVE-type zinc-finger fold. Residues Cys-139, Cys-142, Cys-155, Cys-158, Cys-163, Cys-166, Cys-185, and Cys-188 each coordinate Zn(2+). A disordered region spans residues 205 to 569 (SGPQQPSQDG…CEDVELESES (365 aa)). The span at 206–222 (GPQQPSQDGTLSDTATG) shows a compositional bias: polar residues. Residues 227 to 240 (VPREKKARLQERSR) are compositionally biased toward basic and acidic residues. The span at 241–256 (SQTPLSTAAVSSQDTA) shows a compositional bias: polar residues. Over residues 327–379 (ADERERKERRETRRLEKGRSQDYSDRPEKRDNGRVAEDQKQRKEEEYQTRYRS) the composition is skewed to basic and acidic residues. The span at 399 to 410 (MHARVSRARHER) shows a compositional bias: basic residues. Residues 421 to 459 (EAAAAAPAEATAGKRAPATARVSPPESPRARAAAAQPPT) are compositionally biased toward low complexity. Over residues 460–475 (EHGPPPPRPAPGPAEP) the composition is skewed to pro residues. Residues 476 to 489 (PEPRVPEPLRKQGR) show a composition bias toward basic and acidic residues. Polar residues predominate over residues 511–523 (RNDSLSSDQSESV). The residue at position 514 (Ser-514) is a Phosphoserine. The span at 529–541 (KPHRPKRGGKRRQ) shows a compositional bias: basic residues. The segment covering 559–569 (SCEDVELESES) has biased composition (acidic residues). Residue Ser-592 is modified to Phosphoserine. One can recognise a PDZ domain in the interval 619–705 (RTTMPKESGA…EPQVEIIVSR (87 aa)). A disordered region spans residues 712-746 (RIPESSHPPLESSSSSFESQKMERPSISVISPTSP). Low complexity predominate over residues 714–730 (PESSHPPLESSSSSFES). Ser-742 and Ser-745 each carry phosphoserine. The C2 1 domain maps to 756 to 879 (LPGQLSVKLW…ALLDDEPHWY (124 aa)). The segment at 884–1201 (HDESSLPLPQ…RQLPQVPVRS (318 aa)) is disordered. Phosphoserine is present on Ser-895. Positions 949 to 958 (ATTLTVPEQQ) are enriched in polar residues. Ser-991 bears the Phosphoserine mark. Over residues 1006 to 1023 (RHHDASRSPADHRSRHVE) the composition is skewed to basic and acidic residues. Ser-1045 is subject to Phosphoserine. Over residues 1078–1092 (SPERERHSRKSERCS) the composition is skewed to basic and acidic residues. Polar residues predominate over residues 1173 to 1187 (QGSPTQSPPADTSFG). Ser-1175 is subject to Phosphoserine. Thr-1177 is modified (phosphothreonine). Ser-1179, Ser-1231, Ser-1233, Ser-1234, Ser-1262, Ser-1263, and Ser-1265 each carry phosphoserine. Positions 1256-1313 (DNASAKSSDSDVSDVSAISRASSTSRLSSTSFMSEQSERPRGRISSFTPKMQGRRMGT) are disordered. The span at 1268–1289 (SDVSAISRASSTSRLSSTSFMS) shows a compositional bias: low complexity. Ser-1339 is modified (phosphoserine). Residues 1368-1397 (RSRSTSQLSQTESGHKKLKSTIQRSTETGM) are disordered. One can recognise a C2 2 domain in the interval 1461 to 1579 (AMGDIQIGME…DLSSMVIGWY (119 aa)). Phosphoserine occurs at positions 1600, 1603, 1606, and 1615.

Interacts with RAB3C, RAB10, RAB26 and RAB37. Binds SNAP25, SYT1 and CACNA1B. Interaction with SYT1 is enhanced by calcium ions. Interaction with SNAP25 is weaker in the presence of calcium ions. Binds RAB3A, RAB3B and RAB3D that have been activated by GTP-binding. Binds UNC13A. Interacts with TSPOAP1 and RIMBP2. Interacts with PPFIA3 and PPFIA4. Interacts with ERC1. In terms of processing, phosphorylated by BRSK1. Highly expressed in hippocampus, brain cortex, cerebellum and olfactory bulb. Detected at lower levels in midbrain, hindbrain and spinal cord. Detected retina and in spinal cord motor neurons.

It localises to the cell membrane. It is found in the synapse. Its subcellular location is the presynaptic cell membrane. In terms of biological role, rab effector involved in exocytosis. May act as scaffold protein that regulates neurotransmitter release at the active zone. Essential for maintaining normal probability of neurotransmitter release and for regulating release during short-term synaptic plasticity. Plays a role in dendrite formation by melanocytes. The chain is Regulating synaptic membrane exocytosis protein 1 (Rims1) from Rattus norvegicus (Rat).